The sequence spans 337 residues: WAT1-related protein At1g11460 (337 aa).

The next 10 membrane-spanning stretches (helical) occupy residues 14–34 (WPPI…NALV), 46–66 (IIGA…AYIL), 83–103 (FISG…GLSY), 107–127 (TVAC…ALIL), 139–159 (AGMI…FLTF), 188–208 (WLLG…WILF), 220–240 (FSST…LSLY), 254–274 (FVIG…TVSV), 284–304 (VFVS…DFII), and 309–329 (LYLG…VFLW). In terms of domain architecture, EamA 1 spans 27–157 (MGSVNALVKK…IICISGALFL (131 aa)). Residues 220–328 (FSSTCLMSIF…GTITGLYVFL (109 aa)) enclose the EamA 2 domain.

This sequence belongs to the drug/metabolite transporter (DMT) superfamily. Plant drug/metabolite exporter (P-DME) (TC 2.A.7.4) family.

The protein resides in the membrane. This Arabidopsis thaliana (Mouse-ear cress) protein is WAT1-related protein At1g11460.